A 266-amino-acid polypeptide reads, in one-letter code: MGAGCVKVTKYFLFLFNLLFFILGAVILGFGVWILADKSSFISVLQTSSSSLQVGAYVFIGVGAITMLMGFLGCIGAVNEVRCLLGLYFVFLLLILIAQVTVEVLFYFNANKLKQEMGNTVMDIIQNYSVNASSSREEAWDYVQAQVKCCGWVSPSNWTRNPVLKNSTKTTYPCSCEKTKEEDNQLIVKKGFCESDNSTASENSPEDWPVHPEGCMEKAQAWLQENFGILLGVCAGVAVIELLGLFLSICLCRYIHSEDYSKVPKY.

Residues 1–11 are Cytoplasmic-facing; the sequence is MGAGCVKVTKY. C5 carries S-palmitoyl cysteine lipidation. Residues 12 to 32 traverse the membrane as a helical segment; the sequence is FLFLFNLLFFILGAVILGFGV. Over 33–53 the chain is Extracellular; the sequence is WILADKSSFISVLQTSSSSLQ. A helical transmembrane segment spans residues 54-72; the sequence is VGAYVFIGVGAITMLMGFL. Residues 73 to 83 lie on the Cytoplasmic side of the membrane; sequence GCIGAVNEVRC. Residue C74 is the site of S-palmitoyl cysteine attachment. A helical transmembrane segment spans residues 84–110; sequence LLGLYFVFLLLILIAQVTVEVLFYFNA. The Extracellular portion of the chain corresponds to 111-227; the sequence is NKLKQEMGNT…KAQAWLQENF (117 aa). N-linked (GlcNAc...) asparagine glycosylation is found at N127, N131, N157, N166, and N197. The helical transmembrane segment at 228 to 249 threads the bilayer; it reads GILLGVCAGVAVIELLGLFLSI. The Cytoplasmic portion of the chain corresponds to 250–266; it reads CLCRYIHSEDYSKVPKY.

It belongs to the tetraspanin (TM4SF) family. Forms homooligomers. Interacts directly with IGSF8. Interacts with EGFR. Interacts with VEGFA and PDGFA. Interacts with ITGA4. Interacts with ITGA6; this interaction reduces ITGA6 cell surface expression. Interacts with ITGB1. Interacts with TLR4; this interaction inhibits TLR4-mediated signaling pathway. Interacts with TLR9. Interacts with PLAUR. Post-translationally, palmitoylated. Palmitoylation contributes to oligomerization and surface expression.

It is found in the cell membrane. Functionally, structural component of specialized membrane microdomains known as tetraspanin-enriched microdomains (TERMs), which act as platforms for receptor clustering and signaling. Participates thereby in diverse biological functions such as cell signal transduction, adhesion, migration and protein trafficking. Acts as a attenuator of EGF signaling, facilitating ligand-induced endocytosis of the receptor and its subsequent desensitization. Mechanistically, modulates ligand-induced ubiquitination and trafficking of EGFR via E3 ligase CBL phosphorylation by PKC. Increases cell-matrix adhesion by regulating the membrane organization of integrin alpha4/ITA4. Modulates adhesion and suppresses cell migration through other integrins such as the alpha6/ITGA6 and beta1/ITGB1. Decreases cell-associated plasminogen activation by interfering with the interaction between urokinase-type plasminogen activator/PLAU and its receptor PLAUR. Associates with CD4 or CD8 and delivers costimulatory signals for the TCR/CD3 pathway. Plays a role in the restrains phagocyte migration but supports macrophage activation. Plays a role in TLR9 trafficking to acidified CpG-containing compartments by controlling interaction between TLR9 and VAMP3 and subsequent myddosome assembly. Inhibits LPS-induced inflammatory response by preventing binding of LPS to TLR4 on the cell surface. Plays a role in the activation of macrophages into anti-inflammatory phenotypes. Independently of Toll-like receptor (TLR) signaling, is recruited to pathogen-containing phagosomes prior to fusion with lysosomes and participates in antigen presentation. Also acts to control angiogenesis and switch angiogenic milieu to quiescent state by binding and sequestering VEGFA and PDGFA to inhibit the signaling they trigger via their respective cell surface receptor. This is CD82 antigen (Cd82) from Rattus norvegicus (Rat).